The primary structure comprises 259 residues: Snake venom serine protease homolog rhinocerase 3 (259 aa).

Positions 1-17 (VLIRVLANLLLLQLSYA) are cleaved as a signal peptide. The propeptide occupies 18–23 (QESSEL). A Peptidase S1 domain is found at 24–250 (VIGGDECDIN…YTDWIEGIIA (227 aa)). Cystine bridges form between C30–C164, C51–C67, C99–C257, C143–C211, C175–C190, and C201–C226. Residue N80 is glycosylated (N-linked (GlcNAc...) asparagine). The N-linked (GlcNAc...) asparagine glycan is linked to N252.

This sequence belongs to the peptidase S1 family. Snake venom subfamily. In terms of tissue distribution, expressed by the venom gland.

The protein localises to the secreted. In terms of biological role, snake venom serine protease homolog that may act in the hemostasis system of the prey. The protein is Snake venom serine protease homolog rhinocerase 3 of Bitis rhinoceros (West African gaboon viper).